The following is a 213-amino-acid chain: MRSGVIAQKVGMTRVYNDAGEHVPVTVLRMDGCQVVATRTVEKNGYTAVQLGAGQAKVKNTSKAMRGNFAVANVEPKAKLAEFRVSEDNLLEIGTELKAGHFAAGQLVDVTGTTIGKGFAGAMKRHGFGGLRATHGVSVSHRSHGSTGSRQDPGKVFKNKKMAGHMGQTRVTTQNLEVVSTDEDRGLILIKGAVPGSKGAWIIVRDAVKSAAK.

Q151 is subject to N5-methylglutamine.

The protein belongs to the universal ribosomal protein uL3 family. Part of the 50S ribosomal subunit. Forms a cluster with proteins L14 and L19. Methylated by PrmB.

In terms of biological role, one of the primary rRNA binding proteins, it binds directly near the 3'-end of the 23S rRNA, where it nucleates assembly of the 50S subunit. The protein is Large ribosomal subunit protein uL3 of Rhizobium etli (strain CIAT 652).